Reading from the N-terminus, the 194-residue chain is Putative 3-methyladenine DNA glycosylase (194 aa).

The protein belongs to the DNA glycosylase MPG family.

This is Putative 3-methyladenine DNA glycosylase from Myxococcus xanthus (strain DK1622).